We begin with the raw amino-acid sequence, 1433 residues long: Inositol hexakisphosphate and diphosphoinositol-pentakisphosphate kinase 1 (1433 aa).

64–65 (KK) lines the substrate pocket. ATP is bound by residues arginine 145, lysine 198, histidine 205, arginine 224, 248-251 (EEFM), and 257-259 (DVK). 224–225 (RK) contributes to the substrate binding site. Residues lysine 259 and arginine 273 each contribute to the substrate site. Residues serine 275, aspartate 320, and 332 to 334 (DVN) contribute to the ATP site. 337–340 (SFVK) serves as a coordination point for substrate. Residues 382 to 453 (PTTSGTMMEL…VLDITRLLLA (72 aa)) are polyphosphoinositide-binding domain. The tract at residues 915–1020 (GVEEEGSAPA…PTEMKQSGLG (106 aa)) is disordered. Residues serine 944 and serine 987 each carry the phosphoserine modification. The segment covering 1005–1020 (FSSSRPPTEMKQSGLG) has biased composition (polar residues). A phosphoserine mark is found at serine 1037 and serine 1073. A compositionally biased stretch (polar residues) spans 1134 to 1143 (MHSSQASDNP). 2 disordered regions span residues 1134–1199 (MHSS…DQPS) and 1235–1257 (EPNQ…VSQP). 2 positions are modified to phosphoserine: serine 1145 and serine 1152. A compositionally biased stretch (low complexity) spans 1168 to 1186 (SSGPSSTVSSAGPSSPTTV). Composition is skewed to polar residues over residues 1187-1199 (DGNS…DQPS) and 1236-1250 (PNQS…TSQP).

Belongs to the histidine acid phosphatase family. VIP1 subfamily. Widely expressed, with a higher expression in skeletal muscle, heart and brain.

Its subcellular location is the cytoplasm. It is found in the cytosol. It localises to the cell membrane. The catalysed reaction is 1D-myo-inositol hexakisphosphate + ATP = 1-diphospho-1D-myo-inositol 2,3,4,5,6-pentakisphosphate + ADP. It carries out the reaction 5-diphospho-1D-myo-inositol 1,2,3,4,6-pentakisphosphate + ATP + H(+) = 1,5-bis(diphospho)-1D-myo-inositol 2,3,4,6-tetrakisphosphate + ADP. Its function is as follows. Bifunctional inositol kinase that acts in concert with the IP6K kinases IP6K1, IP6K2 and IP6K3 to synthesize the diphosphate group-containing inositol pyrophosphates diphosphoinositol pentakisphosphate, PP-InsP5, and bis-diphosphoinositol tetrakisphosphate, (PP)2-InsP4. PP-InsP5 and (PP)2-InsP4, also respectively called InsP7 and InsP8, regulate a variety of cellular processes, including apoptosis, vesicle trafficking, cytoskeletal dynamics, exocytosis, insulin signaling and neutrophil activation. Phosphorylates inositol hexakisphosphate (InsP6) at position 1 to produce PP-InsP5 which is in turn phosphorylated by IP6Ks to produce (PP)2-InsP4. Alternatively, phosphorylates PP-InsP5 at position 1, produced by IP6Ks from InsP6, to produce (PP)2-InsP4. Activated when cells are exposed to hyperosmotic stress. This is Inositol hexakisphosphate and diphosphoinositol-pentakisphosphate kinase 1 from Homo sapiens (Human).